The following is a 424-amino-acid chain: Enolase (424 aa).

(2R)-2-phosphoglycerate is bound at residue Gln162. Catalysis depends on Glu204, which acts as the Proton donor. Residues Asp241, Glu284, and Asp311 each coordinate Mg(2+). Residues Lys336, Arg365, Ser366, and Lys387 each contribute to the (2R)-2-phosphoglycerate site. The Proton acceptor role is filled by Lys336.

It belongs to the enolase family. Mg(2+) serves as cofactor.

The protein resides in the cytoplasm. It localises to the secreted. The protein localises to the cell surface. The catalysed reaction is (2R)-2-phosphoglycerate = phosphoenolpyruvate + H2O. It functions in the pathway carbohydrate degradation; glycolysis; pyruvate from D-glyceraldehyde 3-phosphate: step 4/5. Catalyzes the reversible conversion of 2-phosphoglycerate (2-PG) into phosphoenolpyruvate (PEP). It is essential for the degradation of carbohydrates via glycolysis. This is Enolase from Maricaulis maris (strain MCS10) (Caulobacter maris).